A 268-amino-acid polypeptide reads, in one-letter code: MLQYPHINPVALQLGPIKIHWYGLMYLLGIFAGWYLTRYRAKVKPWAPIKPEQVGDLTFYVALGVILGGRIGYIIFYNLPYYFHNPSQMFFLWDGGMSFHGGFIGVLIAFALFARKIGANFFDLGEFIAPVIPIGLGAGRIGNFINGELWGKVTDSPLGMVFPTGGPLPRYPSQLFEFFFEGVVLFSVLWLVTIKKRPRYLVLGLFMFLYGCARFICEFFRQPDPQYGYIFFNWMTMGQILSIPMILLGAVILIAVFIKTRKNKCENI.

4 consecutive transmembrane segments (helical) span residues 14 to 34 (LGPIKIHWYGLMYLLGIFAGW), 57 to 77 (LTFYVALGVILGGRIGYIIFY), 90 to 110 (FFLWDGGMSFHGGFIGVLIAF), and 117 to 137 (IGANFFDLGEFIAPVIPIGLG). A 1,2-diacyl-sn-glycero-3-phospho-(1'-sn-glycerol) is bound at residue Arg140. 3 consecutive transmembrane segments (helical) span residues 174–194 (QLFEFFFEGVVLFSVLWLVTI), 200–220 (YLVLGLFMFLYGCARFICEFF), and 238–258 (GQILSIPMILLGAVILIAVFI).

The protein belongs to the Lgt family.

It is found in the cell inner membrane. It carries out the reaction L-cysteinyl-[prolipoprotein] + a 1,2-diacyl-sn-glycero-3-phospho-(1'-sn-glycerol) = an S-1,2-diacyl-sn-glyceryl-L-cysteinyl-[prolipoprotein] + sn-glycerol 1-phosphate + H(+). It functions in the pathway protein modification; lipoprotein biosynthesis (diacylglyceryl transfer). In terms of biological role, catalyzes the transfer of the diacylglyceryl group from phosphatidylglycerol to the sulfhydryl group of the N-terminal cysteine of a prolipoprotein, the first step in the formation of mature lipoproteins. The polypeptide is Phosphatidylglycerol--prolipoprotein diacylglyceryl transferase (Francisella tularensis subsp. mediasiatica (strain FSC147)).